The chain runs to 88 residues: Co-chaperonin GroES (88 aa).

Belongs to the GroES chaperonin family. Heptamer of 7 subunits arranged in a ring. Interacts with the chaperonin GroEL.

It localises to the cytoplasm. Together with the chaperonin GroEL, plays an essential role in assisting protein folding. The GroEL-GroES system forms a nano-cage that allows encapsulation of the non-native substrate proteins and provides a physical environment optimized to promote and accelerate protein folding. GroES binds to the apical surface of the GroEL ring, thereby capping the opening of the GroEL channel. In Treponema denticola (strain ATCC 35405 / DSM 14222 / CIP 103919 / JCM 8153 / KCTC 15104), this protein is Co-chaperonin GroES.